A 20-amino-acid polypeptide reads, in one-letter code: Cytochrome c oxidase subunit 6A1, mitochondrial (20 aa).

It belongs to the cytochrome c oxidase subunit 6A family. As to quaternary structure, component of the cytochrome c oxidase (complex IV, CIV), a multisubunit enzyme composed of 14 subunits. The complex is composed of a catalytic core of 3 subunits MT-CO1, MT-CO2 and MT-CO3, encoded in the mitochondrial DNA, and 11 supernumerary subunits COX4I, COX5A, COX5B, COX6A, COX6B, COX6C, COX7A, COX7B, COX7C, COX8 and NDUFA4, which are encoded in the nuclear genome. The complex exists as a monomer or a dimer and forms supercomplexes (SCs) in the inner mitochondrial membrane with NADH-ubiquinone oxidoreductase (complex I, CI) and ubiquinol-cytochrome c oxidoreductase (cytochrome b-c1 complex, complex III, CIII), resulting in different assemblies (supercomplex SCI(1)III(2)IV(1) and megacomplex MCI(2)III(2)IV(2)). In terms of tissue distribution, liver specific isoform.

The protein resides in the mitochondrion inner membrane. The protein operates within energy metabolism; oxidative phosphorylation. In terms of biological role, component of the cytochrome c oxidase, the last enzyme in the mitochondrial electron transport chain which drives oxidative phosphorylation. The respiratory chain contains 3 multisubunit complexes succinate dehydrogenase (complex II, CII), ubiquinol-cytochrome c oxidoreductase (cytochrome b-c1 complex, complex III, CIII) and cytochrome c oxidase (complex IV, CIV), that cooperate to transfer electrons derived from NADH and succinate to molecular oxygen, creating an electrochemical gradient over the inner membrane that drives transmembrane transport and the ATP synthase. Cytochrome c oxidase is the component of the respiratory chain that catalyzes the reduction of oxygen to water. Electrons originating from reduced cytochrome c in the intermembrane space (IMS) are transferred via the dinuclear copper A center (CU(A)) of subunit 2 and heme A of subunit 1 to the active site in subunit 1, a binuclear center (BNC) formed by heme A3 and copper B (CU(B)). The BNC reduces molecular oxygen to 2 water molecules unsing 4 electrons from cytochrome c in the IMS and 4 protons from the mitochondrial matrix. This Canis lupus familiaris (Dog) protein is Cytochrome c oxidase subunit 6A1, mitochondrial (COX6A1).